Here is a 363-residue protein sequence, read N- to C-terminus: Neurogenic differentiation factor 2 (363 aa).

A disordered region spans residues 1 to 116; sequence MLTRLFKEPS…VRRQKANARE (116 aa). Positions 28–44 are enriched in basic and acidic residues; that stretch reads EDSKTKDEEQERCRLGD. A compositionally biased stretch (acidic residues) spans 64–83; sequence AGEEDYDEDVDEDDCGEEGD. Over residues 87 to 98 the composition is skewed to basic residues; sequence PKKRGPKKRKMT. The short motif at 93–99 is the Nuclear localization signal element; it reads KKRKMTP. A bHLH domain is found at 107-159; the sequence is VRRQKANARERTRMHDLNSALDNLLKVVPCYSKTQKLSKIETLRLAKNYIWAL.

As to quaternary structure, efficient DNA binding requires dimerization with another bHLH protein. In terms of tissue distribution, in adult, expressed strongly in brain and more weakly in skin, muscle, eye and ovary.

It is found in the nucleus. Its function is as follows. Transcriptional regulator. Appears to mediate neuronal differentiation. The chain is Neurogenic differentiation factor 2 from Danio rerio (Zebrafish).